The following is a 780-amino-acid chain: Translation initiation factor IF-2 (780 aa).

The disordered stretch occupies residues 44–194 (RQLDNAVDGT…TPPKPKELPE (151 aa)). Residues 53 to 65 (TNKKAEAPKKETT) show a composition bias toward basic and acidic residues. Residues 66-81 (SNENGNSKGPNKPNMT) show a composition bias toward polar residues. Composition is skewed to low complexity over residues 82 to 93 (NSNEKSNKPNKP) and 117 to 168 (ANTS…NNKG). The tr-type G domain occupies 281–450 (ERPPVVTIMG…LLVSEVEELK (170 aa)). Residues 290-297 (GHVDHGKT) are G1. 290 to 297 (GHVDHGKT) provides a ligand contact to GTP. Residues 315–319 (GITQH) form a G2 region. The interval 336–339 (DTPG) is G3. Residues 336–340 (DTPGH) and 390–393 (NKID) contribute to the GTP site. Positions 390 to 393 (NKID) are G4. The G5 stretch occupies residues 426 to 428 (SAK).

Belongs to the TRAFAC class translation factor GTPase superfamily. Classic translation factor GTPase family. IF-2 subfamily.

It localises to the cytoplasm. Its function is as follows. One of the essential components for the initiation of protein synthesis. Protects formylmethionyl-tRNA from spontaneous hydrolysis and promotes its binding to the 30S ribosomal subunits. Also involved in the hydrolysis of GTP during the formation of the 70S ribosomal complex. This is Translation initiation factor IF-2 from Listeria welshimeri serovar 6b (strain ATCC 35897 / DSM 20650 / CCUG 15529 / CIP 8149 / NCTC 11857 / SLCC 5334 / V8).